Reading from the N-terminus, the 520-residue chain is MAIKSDQISSLIKQQLEKYDSTLKIDEVGTVTYVGDGVARASGLANVMSGELVEFENGVYGMAQNLEESEVGIIVLGDFDGISQGDTVKRTGKVMEVPVGDEMIGRVVNALGQPIDGNGAIKTKHTRPVEFKAPGVMQRKSVFEPLQTGIKVIDALVPIGRGQRELIIGDRKTGKTSLAIDTILNQKDQDMIVVYVAIGQKDSTVRTQVETLREMGALDYTIVVSAAPSEPAPMLYLAPYVGAALGEYFMYNGKHVLIVYDDLSKQATAYRELSLILRRPPGREAYPGDVFYLHSRLLERAAKLSDELGGGSMTALPIIETQAGDVSAYIPTNVISITDGQIFLDADQFYSGNRPAIDAGTSVSRVGGDAQIKAMKKVSGTLRLDLASYHELEAFAQFGSDLDAPTQAKLARGRRTVEVLNQPLHQPMPVEHQVIVLYALTHGYLDDIDVSDIQRFQKELIDFVSGDKSYKKIFAAIKKTGNLPDEKDINSAIDDFKKHFSKSVEPTDYVAPSTKQEANK.

Position 169–176 (169–176 (GDRKTGKT)) interacts with ATP.

Belongs to the ATPase alpha/beta chains family. In terms of assembly, F-type ATPases have 2 components, CF(1) - the catalytic core - and CF(0) - the membrane proton channel. CF(1) has five subunits: alpha(3), beta(3), gamma(1), delta(1), epsilon(1). CF(0) has three main subunits: a(1), b(2) and c(9-12). The alpha and beta chains form an alternating ring which encloses part of the gamma chain. CF(1) is attached to CF(0) by a central stalk formed by the gamma and epsilon chains, while a peripheral stalk is formed by the delta and b chains.

The protein resides in the cell membrane. The catalysed reaction is ATP + H2O + 4 H(+)(in) = ADP + phosphate + 5 H(+)(out). Its function is as follows. Produces ATP from ADP in the presence of a proton gradient across the membrane. The alpha chain is a regulatory subunit. The protein is ATP synthase subunit alpha of Oenococcus oeni (strain ATCC BAA-331 / PSU-1).